The primary structure comprises 199 residues: 3-isopropylmalate dehydratase small subunit (199 aa).

It belongs to the LeuD family. LeuD type 1 subfamily. In terms of assembly, heterodimer of LeuC and LeuD.

It catalyses the reaction (2R,3S)-3-isopropylmalate = (2S)-2-isopropylmalate. The protein operates within amino-acid biosynthesis; L-leucine biosynthesis; L-leucine from 3-methyl-2-oxobutanoate: step 2/4. Functionally, catalyzes the isomerization between 2-isopropylmalate and 3-isopropylmalate, via the formation of 2-isopropylmaleate. The polypeptide is 3-isopropylmalate dehydratase small subunit (Bacillus licheniformis (strain ATCC 14580 / DSM 13 / JCM 2505 / CCUG 7422 / NBRC 12200 / NCIMB 9375 / NCTC 10341 / NRRL NRS-1264 / Gibson 46)).